A 168-amino-acid polypeptide reads, in one-letter code: DAZ-associated protein 2 (168 aa).

The segment covering 1–13 has biased composition (low complexity); sequence MNSKGQYPTQPTY. The disordered stretch occupies residues 1–25; the sequence is MNSKGQYPTQPTYPVQPPGNPVYPQ. A PPAY motif is present at residues 39–42; that stretch reads PPAY. S77 carries the post-translational modification Phosphoserine.

As to quaternary structure, interacts with SOX6. Interacts with DAZ1 and DAZL. Interacts with IL17RB. May interact with FAM168B. Interacts with INCA1. Interacts with EIF4G1 and EIF4G2. Interacts (via PPAY motif) with NEDD4 (via WW domains). Interacts with transcription factor TCF4; the interaction results in localization of DAZAP2 to the nucleus. Interacts with transcription factors TCF7 and TCF7L1. Interacts with transcription factor LEF1. Interacts with serine/threonine-protein kinase HIPK2; the interaction results in phosphorylation of DAZAP2 which causes localization of DAZAP2 to the nucleus, reduces interaction of DAZAP2 with HIPK2 and prevents DAZAP2-dependent degradation of HIPK2. Interacts with ubiquitin ligase SIAH1; the interaction is decreased following phosphorylation of DAZAP2 by HIPK2. Interacts with TP53; the interaction is triggered by DNA damage. Post-translationally, ubiquitinated by SMURF2, leading to proteasomal degradation. Ubiquitinated by NEDD4, leading to proteasomal degradation. Following DNA damage, phosphorylated by HIPK2 which promotes DAZAP2 localization to the nucleus, reduces interaction of DAZAP2 with HIPK2 and SIAH1, and prevents DAZAP2-dependent ubiquitination of HIPK2 by E3 ubiquitin-protein ligase SIAH1 and subsequent HIPK2 proteasomal degradation.

Its subcellular location is the cytoplasm. The protein localises to the nucleus. It is found in the nucleus speckle. The protein resides in the nuclear body. It localises to the stress granule. In unstressed cells, promotes SIAH1-mediated polyubiquitination and degradation of the serine/threonine-protein kinase HIPK2, probably by acting as a loading factor that potentiates complex formation between HIPK2 and ubiquitin ligase SIAH1. In response to DNA damage, localizes to the nucleus following phosphorylation by HIPK2 and modulates the expression of a subset of TP53/p53 target genes by binding to TP53 at target gene promoters. This limits the expression of a number of cell death-mediating TP53 target genes, reducing DNA damage-induced cell death. Enhances the binding of transcription factor TCF7L2/TCF4, a Wnt signaling pathway effector, to the promoters of target genes. Plays a role in stress granule formation. This chain is DAZ-associated protein 2, found in Bos taurus (Bovine).